We begin with the raw amino-acid sequence, 230 residues long: Fibrillarin-like rRNA/tRNA 2'-O-methyltransferase (230 aa).

Residues 89-90 (TT), 107-108 (EV), 132-133 (DA), and 152-155 (DISQ) contribute to the S-adenosyl-L-methionine site.

This sequence belongs to the methyltransferase superfamily. Fibrillarin family. In terms of assembly, interacts with nop5. Component of box C/D small ribonucleoprotein (sRNP) particles that contain rpl7ae, FlpA and nop5, plus a guide RNA.

In terms of biological role, involved in pre-rRNA and tRNA processing. Utilizes the methyl donor S-adenosyl-L-methionine to catalyze the site-specific 2'-hydroxyl methylation of ribose moieties in rRNA and tRNA. Site specificity is provided by a guide RNA that base pairs with the substrate. Methylation occurs at a characteristic distance from the sequence involved in base pairing with the guide RNA. The sequence is that of Fibrillarin-like rRNA/tRNA 2'-O-methyltransferase from Thermoplasma acidophilum (strain ATCC 25905 / DSM 1728 / JCM 9062 / NBRC 15155 / AMRC-C165).